We begin with the raw amino-acid sequence, 201 residues long: Orotate phosphoribosyltransferase (201 aa).

113–121 (EDIITTGKS) contacts 5-phospho-alpha-D-ribose 1-diphosphate. Orotate contacts are provided by threonine 117 and arginine 145.

Belongs to the purine/pyrimidine phosphoribosyltransferase family. PyrE subfamily. As to quaternary structure, homodimer. Requires Mg(2+) as cofactor.

It carries out the reaction orotidine 5'-phosphate + diphosphate = orotate + 5-phospho-alpha-D-ribose 1-diphosphate. It functions in the pathway pyrimidine metabolism; UMP biosynthesis via de novo pathway; UMP from orotate: step 1/2. Its function is as follows. Catalyzes the transfer of a ribosyl phosphate group from 5-phosphoribose 1-diphosphate to orotate, leading to the formation of orotidine monophosphate (OMP). This Helicobacter acinonychis (strain Sheeba) protein is Orotate phosphoribosyltransferase.